A 464-amino-acid polypeptide reads, in one-letter code: Fumarate hydratase class II (464 aa).

Substrate-binding positions include 98–100, 129–132, 139–141, and Thr187; these read SGT, HPND, and SSN. The active-site Proton donor/acceptor is His188. Ser318 is a catalytic residue. Substrate-binding positions include Ser319 and 324-326; that span reads KVN.

This sequence belongs to the class-II fumarase/aspartase family. Fumarase subfamily. In terms of assembly, homotetramer.

Its subcellular location is the cytoplasm. The catalysed reaction is (S)-malate = fumarate + H2O. It participates in carbohydrate metabolism; tricarboxylic acid cycle; (S)-malate from fumarate: step 1/1. Functionally, involved in the TCA cycle. Catalyzes the stereospecific interconversion of fumarate to L-malate. The polypeptide is Fumarate hydratase class II (Pasteurella multocida (strain Pm70)).